The primary structure comprises 102 residues: Complement inhibitor RaCI6 (102 aa).

Residues 1-24 form the signal peptide; it reads MAALNGLVLLLLTISAMFISECYS. 2 cysteine pairs are disulfide-bonded: C37–C61 and C42–C63.

Belongs to the RaCI family. In terms of tissue distribution, expressed in salivary glands.

Its subcellular location is the secreted. Complement inhibitor. Prevents complement-mediated C5 activation by binding to C5. Binds C5 at a different binding site than the other tick complement inhibitors OmCI and CirpT1, and the drug eculizumab. In Dermacentor andersoni (Rocky mountain wood tick), this protein is Complement inhibitor RaCI6.